The following is a 353-amino-acid chain: MATCWPEPIVSVQSLSQTGVPTVPNRYVKPAHQRPVFNTTQSDAGIEIPVLDMNDVWGKPEGLRLVRSACEEWGFFQMVNHGVTHSLMERVRGAWREFFELPLEEKRKYANSPDTYEGYGSRLGVVKDAKLDWSDYFFLNYLPSSIRNPSKWPSQPPKIRELIEKYGEEVRKLCERLTETLSESLGLKPNKLMQALGGGDKVGASLRTNFYPKCPQPQLTLGLSSHSDPGGITILLPDEKVAGLQVRRGDGWVTIKSVPNALIVNIGDQLQILSNGIYKSVEHQVIVNSGMERVSLAFFYNPRSDIPVGPIEELVTANRPALYKPIRFDEYRSLIRQKGPCGKNQVDSLLLTR.

Positions 202–302 (VGASLRTNFY…RVSLAFFYNP (101 aa)) constitute a Fe2OG dioxygenase domain. Arginine 207 provides a ligand contact to jasmonate. 2-oxoglutarate is bound by residues asparagine 209 and tyrosine 211. Residues histidine 226, aspartate 228, and histidine 283 each coordinate Fe cation. The 2-oxoglutarate site is built by arginine 293 and serine 295. Arginine 332 and arginine 336 together coordinate jasmonate.

The protein belongs to the iron/ascorbate-dependent oxidoreductase family. L-ascorbate serves as cofactor. Requires Fe(2+) as cofactor.

It catalyses the reaction jasmonate + 2-oxoglutarate + O2 = (1R,2R)-12-hydroxyjasmonate + succinate + CO2. 2-oxoglutarate-dependent dioxygenase involved in the oxidation of jasmonate (JA), a stress-induced phytohormone synthesized in response to attack by pathogens and herbivores, which triggers the activation of defense responses via the JA-mediated signaling pathway. Converts JA to 12-hydroxyjasmonate (12OH-JA), an inactive form of JA. Is specific to free JA, and cannot oxidize the bioactive form jasmonoyl-L-isoleucine (JA-Ile) or other JA-amino acid conjugates. Prevents over-accumulation of JA and indirectly its bioactive form JA-Ile under stress response. Acts as a negative regulator of JA-mediated defense signaling, by contributing to 12OH-JA accumulation, which represses JA defense responses upon infection by the fungal pathogen Botrytis cinerea. Acts as a negative regulator of JA-mediated defense responses upon infestation by the herbivorous caterpillar Mamestra brassicae. The chain is Jasmonate-induced oxygenase 4 from Arabidopsis thaliana (Mouse-ear cress).